Consider the following 559-residue polypeptide: Urocanate hydratase (559 aa).

NAD(+) is bound by residues 53 to 54, glutamine 131, 177 to 179, glutamate 197, arginine 202, 243 to 244, 264 to 268, 274 to 275, and tyrosine 323; these read GG, GMG, NA, QTSAH, and YL. Residue cysteine 411 is part of the active site. NAD(+) is bound at residue glycine 493.

This sequence belongs to the urocanase family. It depends on NAD(+) as a cofactor.

It is found in the cytoplasm. The catalysed reaction is 4-imidazolone-5-propanoate = trans-urocanate + H2O. It functions in the pathway amino-acid degradation; L-histidine degradation into L-glutamate; N-formimidoyl-L-glutamate from L-histidine: step 2/3. Catalyzes the conversion of urocanate to 4-imidazolone-5-propionate. The sequence is that of Urocanate hydratase from Pseudomonas paraeruginosa (strain DSM 24068 / PA7) (Pseudomonas aeruginosa (strain PA7)).